Consider the following 420-residue polypeptide: Tyrosine--tRNA ligase (420 aa).

L-tyrosine is bound at residue tyrosine 36. The short motif at 41–50 (PTADSLHIGH) is the 'HIGH' region element. L-tyrosine contacts are provided by tyrosine 170 and glutamine 174. Residues 231-235 (KFGKS) carry the 'KMSKS' region motif. Lysine 234 lines the ATP pocket. One can recognise an S4 RNA-binding domain in the interval 353–420 (SNIIDVLIET…KKKYFMVNYK (68 aa)).

The protein belongs to the class-I aminoacyl-tRNA synthetase family. TyrS type 1 subfamily. In terms of assembly, homodimer.

The protein resides in the cytoplasm. The catalysed reaction is tRNA(Tyr) + L-tyrosine + ATP = L-tyrosyl-tRNA(Tyr) + AMP + diphosphate + H(+). Its function is as follows. Catalyzes the attachment of tyrosine to tRNA(Tyr) in a two-step reaction: tyrosine is first activated by ATP to form Tyr-AMP and then transferred to the acceptor end of tRNA(Tyr). This is Tyrosine--tRNA ligase from Staphylococcus haemolyticus (strain JCSC1435).